A 193-amino-acid chain; its full sequence is Segregation and condensation protein B (193 aa).

Belongs to the ScpB family. As to quaternary structure, homodimer. Homodimerization may be required to stabilize the binding of ScpA to the Smc head domains. Component of a cohesin-like complex composed of ScpA, ScpB and the Smc homodimer, in which ScpA and ScpB bind to the head domain of Smc. The presence of the three proteins is required for the association of the complex with DNA.

It is found in the cytoplasm. Its function is as follows. Participates in chromosomal partition during cell division. May act via the formation of a condensin-like complex containing Smc and ScpA that pull DNA away from mid-cell into both cell halves. This is Segregation and condensation protein B from Streptococcus thermophilus (strain ATCC BAA-250 / LMG 18311).